The chain runs to 275 residues: Tryptophan synthase alpha chain (275 aa).

Catalysis depends on proton acceptor residues Glu-51 and Glu-62.

The protein belongs to the TrpA family. In terms of assembly, tetramer of two alpha and two beta chains.

It carries out the reaction (1S,2R)-1-C-(indol-3-yl)glycerol 3-phosphate + L-serine = D-glyceraldehyde 3-phosphate + L-tryptophan + H2O. Its pathway is amino-acid biosynthesis; L-tryptophan biosynthesis; L-tryptophan from chorismate: step 5/5. Functionally, the alpha subunit is responsible for the aldol cleavage of indoleglycerol phosphate to indole and glyceraldehyde 3-phosphate. This chain is Tryptophan synthase alpha chain, found in Caulobacter sp. (strain K31).